Consider the following 300-residue polypeptide: UDP-3-O-acyl-N-acetylglucosamine deacetylase (300 aa).

Zn(2+) contacts are provided by His-78, His-237, and Asp-241. The Proton donor role is filled by His-264.

Belongs to the LpxC family. Zn(2+) serves as cofactor.

It catalyses the reaction a UDP-3-O-[(3R)-3-hydroxyacyl]-N-acetyl-alpha-D-glucosamine + H2O = a UDP-3-O-[(3R)-3-hydroxyacyl]-alpha-D-glucosamine + acetate. The protein operates within glycolipid biosynthesis; lipid IV(A) biosynthesis; lipid IV(A) from (3R)-3-hydroxytetradecanoyl-[acyl-carrier-protein] and UDP-N-acetyl-alpha-D-glucosamine: step 2/6. Its function is as follows. Catalyzes the hydrolysis of UDP-3-O-myristoyl-N-acetylglucosamine to form UDP-3-O-myristoylglucosamine and acetate, the committed step in lipid A biosynthesis. In Acinetobacter baumannii (strain SDF), this protein is UDP-3-O-acyl-N-acetylglucosamine deacetylase.